Here is a 758-residue protein sequence, read N- to C-terminus: 5-methyltetrahydropteroyltriglutamate--homocysteine methyltransferase (758 aa).

5-methyltetrahydropteroyltri-L-glutamate-binding positions include 17–20 (RELK) and Lys117. L-homocysteine contacts are provided by residues 434–436 (IGS) and Glu487. L-methionine-binding positions include 434–436 (IGS) and Glu487. Residues 518 to 519 (RC) and Trp564 contribute to the 5-methyltetrahydropteroyltri-L-glutamate site. Asp602 contacts L-homocysteine. Asp602 is a binding site for L-methionine. Glu608 is a 5-methyltetrahydropteroyltri-L-glutamate binding site. Zn(2+)-binding residues include His644, Cys646, and Glu668. His697 acts as the Proton donor in catalysis. Cys729 lines the Zn(2+) pocket.

This sequence belongs to the vitamin-B12 independent methionine synthase family. It depends on Zn(2+) as a cofactor.

It catalyses the reaction 5-methyltetrahydropteroyltri-L-glutamate + L-homocysteine = tetrahydropteroyltri-L-glutamate + L-methionine. It functions in the pathway amino-acid biosynthesis; L-methionine biosynthesis via de novo pathway; L-methionine from L-homocysteine (MetE route): step 1/1. Functionally, catalyzes the transfer of a methyl group from 5-methyltetrahydrofolate to homocysteine resulting in methionine formation. The chain is 5-methyltetrahydropteroyltriglutamate--homocysteine methyltransferase from Photorhabdus laumondii subsp. laumondii (strain DSM 15139 / CIP 105565 / TT01) (Photorhabdus luminescens subsp. laumondii).